Here is a 568-residue protein sequence, read N- to C-terminus: Glucose-6-phosphate isomerase, cytosolic 1 (568 aa).

Residue Glu-360 is the Proton donor of the active site. Catalysis depends on residues His-391 and Lys-516.

It belongs to the GPI family. In terms of assembly, homodimer.

It localises to the cytoplasm. The enzyme catalyses alpha-D-glucose 6-phosphate = beta-D-fructose 6-phosphate. Its pathway is carbohydrate degradation; glycolysis; D-glyceraldehyde 3-phosphate and glycerone phosphate from D-glucose: step 2/4. The protein is Glucose-6-phosphate isomerase, cytosolic 1 (PGIC1) of Clarkia mildrediae.